The chain runs to 82 residues: Probable 26S proteasome complex subunit dss-1 (82 aa).

Residues 56–82 (NWDDETHESEFSKQLKEELRKSGHQVA) are disordered. Basic and acidic residues predominate over residues 63 to 76 (ESEFSKQLKEELRK).

It belongs to the DSS1/SEM1 family. In terms of assembly, part of the 26S proteasome. Expressed in intestinal epithelium and head neurons.

It is found in the nucleus. Its subcellular location is the cytoplasm. Subunit of the 26S proteasome which plays a role in ubiquitin-dependent proteolysis. Has an essential role in oogenesis and larval growth. Required for intestinal function and default lifespan. This is Probable 26S proteasome complex subunit dss-1 (dss-1) from Caenorhabditis elegans.